A 480-amino-acid chain; its full sequence is Sestrin-2 (480 aa).

Met1 bears the N-acetylmethionine mark. The disordered stretch occupies residues 20-45 (PGGVGDSGPGEEQRESRARRGPRGPS). The interval 66-239 (GLEALMSSGR…APTPPSEQSS (174 aa)) is N-terminal domain; mediates the alkylhydroperoxide reductase activity. Residue Cys125 is the Cysteine sulfenic acid (-SOH) intermediate of the active site. A Glycyl lysine isopeptide (Lys-Gly) (interchain with G-Cter in ubiquitin) cross-link involves residue Lys175. 2 disordered regions span residues 222-252 (ADGS…SGGF) and 272-291 (LLRD…ELEK). Ser249 is modified (phosphoserine). Positions 308 to 480 (PHPDMLCFVE…ALRAITRYMT (173 aa)) are C-terminal domain; mediates TORC1 regulation. Residues 374–377 (TYNT), Thr386, and Glu451 contribute to the L-leucine site.

The protein belongs to the sestrin family. In terms of assembly, interacts with the GATOR2 complex which is composed of MIOS, SEC13, SEH1L, WDR24 and WDR59; the interaction is negatively regulated by leucine. Conveys leucine availability via direct interaction with SEH1L and WDR24 components of the GATOR2 complex. Interacts with RRAGA, RRAGB, RRAGC and RRAGD; may function as a guanine nucleotide dissociation inhibitor for RRAGs and regulate them. May interact with the TORC2 complex. Interacts with KEAP1, RBX1, SQSTM and ULK1; to regulate the degradation of KEAP1. May also associate with the complex composed of TSC1, TSC2 and the AMP-responsive protein kinase/AMPK to regulate TORC1 signaling. May interact with PRDX1. Phosphorylated by ULK1 at multiple sites. Post-translationally, ubiquitinated at Lys-175 by RNF167 via 'Lys-63'-linked polyubiquitination in response to leucine deprivation: ubiquitination promotes SESN2-interaction with the GATOR2 complex, leading to inhibit the TORC1 signaling pathway. Deubiquitinated at Lys-175 by STAMBPL1, promoting the TORC1 signaling pathway. Ubiquitinated by RNF186; ubiquitination mediates proteasomal degradation. As to expression, widely expressed.

It is found in the cytoplasm. It carries out the reaction a hydroperoxide + L-cysteinyl-[protein] = S-hydroxy-L-cysteinyl-[protein] + an alcohol. Its function is as follows. Functions as an intracellular leucine sensor that negatively regulates the mTORC1 signaling pathway through the GATOR complex. In absence of leucine, binds the GATOR subcomplex GATOR2 and prevents mTORC1 signaling. Binding of leucine to SESN2 disrupts its interaction with GATOR2 thereby activating the TORC1 signaling pathway. This stress-inducible metabolic regulator also plays a role in protection against oxidative and genotoxic stresses. May negatively regulate protein translation in response to endoplasmic reticulum stress, via mTORC1. May positively regulate the transcription by NFE2L2 of genes involved in the response to oxidative stress by facilitating the SQSTM1-mediated autophagic degradation of KEAP1. May also mediate TP53 inhibition of TORC1 signaling upon genotoxic stress. Moreover, may prevent the accumulation of reactive oxygen species (ROS) through the alkylhydroperoxide reductase activity born by the N-terminal domain of the protein. Was originally reported to contribute to oxidative stress resistance by reducing PRDX1. However, this could not be confirmed. This Homo sapiens (Human) protein is Sestrin-2.